The following is a 428-amino-acid chain: Trigger factor (428 aa).

The 86-residue stretch at glycine 163–proline 248 folds into the PPIase FKBP-type domain.

Belongs to the FKBP-type PPIase family. Tig subfamily.

It localises to the cytoplasm. The catalysed reaction is [protein]-peptidylproline (omega=180) = [protein]-peptidylproline (omega=0). Its function is as follows. Involved in protein export. Acts as a chaperone by maintaining the newly synthesized protein in an open conformation. Functions as a peptidyl-prolyl cis-trans isomerase. This Geobacillus thermodenitrificans (strain NG80-2) protein is Trigger factor.